Consider the following 611-residue polypeptide: Chaperone protein DnaK (611 aa).

Residue Thr173 is modified to Phosphothreonine; by autocatalysis. The segment covering Gln577 to Ala592 has biased composition (low complexity). A disordered region spans residues Gln577 to Lys611. Positions Val600–Lys611 are enriched in acidic residues.

This sequence belongs to the heat shock protein 70 family.

Its function is as follows. Acts as a chaperone. In Bacillus cereus (strain G9842), this protein is Chaperone protein DnaK.